The following is a 216-amino-acid chain: Probable GTP-binding protein EngB (216 aa).

An EngB-type G domain is found at 37 to 214; that stretch reads GSVEIAFAGR…RAAMIRLLDE (178 aa). GTP is bound by residues 45-52, 72-76, 92-95, 159-162, and 193-195; these read GRSNVGKS, GRTQE, DMPG, TKAD, and TSS. Mg(2+)-binding residues include Ser52 and Thr74.

It belongs to the TRAFAC class TrmE-Era-EngA-EngB-Septin-like GTPase superfamily. EngB GTPase family. Mg(2+) is required as a cofactor.

Its function is as follows. Necessary for normal cell division and for the maintenance of normal septation. The chain is Probable GTP-binding protein EngB from Rhodopseudomonas palustris (strain ATCC BAA-98 / CGA009).